A 526-amino-acid polypeptide reads, in one-letter code: Non-reducing end alpha-L-arabinofuranosidase BoGH43A (526 aa).

The N-terminal stretch at 1 to 20 (MRNALFLIFISLCSVCKSSA) is a signal peptide. Catalysis depends on aspartate 34, which acts as the Proton acceptor. Glutamate 189 functions as the Proton donor in the catalytic mechanism.

Belongs to the glycosyl hydrolase 43 family.

The protein localises to the periplasm. It catalyses the reaction Hydrolysis of terminal non-reducing alpha-L-arabinofuranoside residues in alpha-L-arabinosides.. Its pathway is glucan metabolism; xyloglucan degradation. Its function is as follows. Alpha-L-arabinofuranosidase involved in xyloglucan degradation by mediating the cleavage of terminal non-reducing alpha-L-arabinofuranoside residues in xyloglucan branches, converting the 'S' units to 'X' units. The protein is Non-reducing end alpha-L-arabinofuranosidase BoGH43A of Bacteroides ovatus (strain ATCC 8483 / DSM 1896 / JCM 5824 / BCRC 10623 / CCUG 4943 / NCTC 11153).